Reading from the N-terminus, the 259-residue chain is Phosphate import ATP-binding protein PstB (259 aa).

The ABC transporter domain maps to 6–254 (SKNESVVFDV…PKDKRTEDYI (249 aa)). 45-52 (GPSGCGKS) provides a ligand contact to ATP.

It belongs to the ABC transporter superfamily. Phosphate importer (TC 3.A.1.7) family. The complex is composed of two ATP-binding proteins (PstB), two transmembrane proteins (PstC and PstA) and a solute-binding protein (PstS).

The protein resides in the cell membrane. The enzyme catalyses phosphate(out) + ATP + H2O = ADP + 2 phosphate(in) + H(+). In terms of biological role, part of the ABC transporter complex PstSACB involved in phosphate import. Responsible for energy coupling to the transport system. The polypeptide is Phosphate import ATP-binding protein PstB (Desulfitobacterium hafniense (strain Y51)).